A 237-amino-acid chain; its full sequence is Leucyl/phenylalanyl-tRNA--protein transferase (237 aa).

This sequence belongs to the L/F-transferase family.

The protein localises to the cytoplasm. It carries out the reaction N-terminal L-lysyl-[protein] + L-leucyl-tRNA(Leu) = N-terminal L-leucyl-L-lysyl-[protein] + tRNA(Leu) + H(+). It catalyses the reaction N-terminal L-arginyl-[protein] + L-leucyl-tRNA(Leu) = N-terminal L-leucyl-L-arginyl-[protein] + tRNA(Leu) + H(+). The catalysed reaction is L-phenylalanyl-tRNA(Phe) + an N-terminal L-alpha-aminoacyl-[protein] = an N-terminal L-phenylalanyl-L-alpha-aminoacyl-[protein] + tRNA(Phe). Functions in the N-end rule pathway of protein degradation where it conjugates Leu, Phe and, less efficiently, Met from aminoacyl-tRNAs to the N-termini of proteins containing an N-terminal arginine or lysine. The protein is Leucyl/phenylalanyl-tRNA--protein transferase of Aromatoleum aromaticum (strain DSM 19018 / LMG 30748 / EbN1) (Azoarcus sp. (strain EbN1)).